The primary structure comprises 481 residues: Aspartyl/glutamyl-tRNA(Asn/Gln) amidotransferase subunit B (481 aa).

This sequence belongs to the GatB/GatE family. GatB subfamily. Heterotrimer of A, B and C subunits.

It carries out the reaction L-glutamyl-tRNA(Gln) + L-glutamine + ATP + H2O = L-glutaminyl-tRNA(Gln) + L-glutamate + ADP + phosphate + H(+). It catalyses the reaction L-aspartyl-tRNA(Asn) + L-glutamine + ATP + H2O = L-asparaginyl-tRNA(Asn) + L-glutamate + ADP + phosphate + 2 H(+). Allows the formation of correctly charged Asn-tRNA(Asn) or Gln-tRNA(Gln) through the transamidation of misacylated Asp-tRNA(Asn) or Glu-tRNA(Gln) in organisms which lack either or both of asparaginyl-tRNA or glutaminyl-tRNA synthetases. The reaction takes place in the presence of glutamine and ATP through an activated phospho-Asp-tRNA(Asn) or phospho-Glu-tRNA(Gln). The chain is Aspartyl/glutamyl-tRNA(Asn/Gln) amidotransferase subunit B from Pseudomonas putida (strain ATCC 700007 / DSM 6899 / JCM 31910 / BCRC 17059 / LMG 24140 / F1).